Reading from the N-terminus, the 468-residue chain is H(+)/Cl(-) exchange transporter ClcA (468 aa).

Topologically, residues M1 to P30 are cytoplasmic. The helical transmembrane segment at F31–K67 threads the bilayer. The Periplasmic portion of the chain corresponds to S68–L74. The helical transmembrane segment at P75 to F98 threads the bilayer. A Selectivity filter part_1 motif is present at residues G104–P108. Residue S105 coordinates chloride. Positions I107–M114 form an intramembrane region, helical. The Cytoplasmic portion of the chain corresponds to D115–R121. The next 2 helical transmembrane spans lie at W122–S139 and E146–F164. The Selectivity filter part_2 motif lies at G144–P148. Residues R165–S174 lie on the Cytoplasmic side of the membrane. 2 intramembrane regions (helical) span residues L175–A187 and P191–I199. The Cytoplasmic segment spans residues E200 to S212. A helical membrane pass occupies residues V213 to I230. At N231–L250 the chain is on the periplasmic side. A helical transmembrane segment spans residues G251 to V279. The Cytoplasmic segment spans residues K280–D285. A helical transmembrane segment spans residues R286–V307. The Periplasmic portion of the chain corresponds to P308–G327. Transmembrane regions (helical) follow at residues A328–G347 and G353–K374. Residues G353 to P357 carry the Selectivity filter part_3 motif. 2 residues coordinate chloride: I354 and F355. Over V375–P384 the chain is Periplasmic. An intramembrane region (helical) is located at residues G385–T399. An intramembrane region (note=Loop between two helices) is located at residues V400–A402. Positions P403–T414 form an intramembrane region, helical. The note=Loop between two helices intramembrane region spans N415–L419. The chain crosses the membrane as a helical span at residues I420–L436. Residues L437 to S468 lie on the Cytoplasmic side of the membrane. Residue Y443 coordinates chloride.

It belongs to the chloride channel (TC 2.A.49) family. ClcA subfamily. Homodimer.

It localises to the cell inner membrane. The enzyme catalyses 2 chloride(in) + H(+)(out) = 2 chloride(out) + H(+)(in). Functionally, proton-coupled chloride transporter. Functions as antiport system and exchanges two chloride ions for 1 proton. Probably acts as an electrical shunt for an outwardly-directed proton pump that is linked to amino acid decarboxylation, as part of the extreme acid resistance (XAR) response. In Vibrio cholerae serotype O1 (strain ATCC 39541 / Classical Ogawa 395 / O395), this protein is H(+)/Cl(-) exchange transporter ClcA.